We begin with the raw amino-acid sequence, 290 residues long: Acetylglutamate kinase (290 aa).

Substrate is bound by residues 72-73 (GG), R94, and N187.

Belongs to the acetylglutamate kinase family. ArgB subfamily.

Its subcellular location is the plastid. The protein resides in the chloroplast. It catalyses the reaction N-acetyl-L-glutamate + ATP = N-acetyl-L-glutamyl 5-phosphate + ADP. The protein operates within amino-acid biosynthesis; L-arginine biosynthesis; N(2)-acetyl-L-ornithine from L-glutamate: step 2/4. Catalyzes the ATP-dependent phosphorylation of N-acetyl-L-glutamate. In Cyanidioschyzon merolae (strain NIES-3377 / 10D) (Unicellular red alga), this protein is Acetylglutamate kinase.